The primary structure comprises 229 residues: Potassium/proton antiporter CemA (229 aa).

The next 3 membrane-spanning stretches (helical) occupy residues 7–27, 107–127, and 189–209; these read FTPLFYLASIVFLPWWISFSV, ILHFSTNIICFIILSGYSILG, and IISGLVSTFPVILDTIFKYWI.

Belongs to the CemA family.

It localises to the plastid. It is found in the chloroplast inner membrane. The catalysed reaction is K(+)(in) + H(+)(out) = K(+)(out) + H(+)(in). Its function is as follows. Contributes to K(+)/H(+) antiport activity by supporting proton efflux to control proton extrusion and homeostasis in chloroplasts in a light-dependent manner to modulate photosynthesis. Prevents excessive induction of non-photochemical quenching (NPQ) under continuous-light conditions. Indirectly promotes efficient inorganic carbon uptake into chloroplasts. The chain is Potassium/proton antiporter CemA from Nicotiana sylvestris (Wood tobacco).